Here is a 147-residue protein sequence, read N- to C-terminus: uncharacterized protein (147 aa).

In terms of domain architecture, HTH marR-type spans 1 to 137; sequence MRDNTIGSLI…LYELMTKVHK (137 aa). Positions 53-76 form a DNA-binding region, H-T-H motif; that stretch reads QMELAEKVTVTQGGISRMLTRLEK.

This is an uncharacterized protein from Bacillus anthracis.